The primary structure comprises 213 residues: Probable nicotinate-nucleotide adenylyltransferase (213 aa).

This sequence belongs to the NadD family.

It carries out the reaction nicotinate beta-D-ribonucleotide + ATP + H(+) = deamido-NAD(+) + diphosphate. It functions in the pathway cofactor biosynthesis; NAD(+) biosynthesis; deamido-NAD(+) from nicotinate D-ribonucleotide: step 1/1. Functionally, catalyzes the reversible adenylation of nicotinate mononucleotide (NaMN) to nicotinic acid adenine dinucleotide (NaAD). This Pectobacterium atrosepticum (strain SCRI 1043 / ATCC BAA-672) (Erwinia carotovora subsp. atroseptica) protein is Probable nicotinate-nucleotide adenylyltransferase.